The chain runs to 403 residues: RILP-like protein 1 (403 aa).

S7 carries the phosphoserine modification. The RH1 domain occupies 10-97; sequence AAESALEKNV…RLERMDRIEK (88 aa). An S-nitrosocysteine modification is found at C47. Residues 76–265 are a coiled coil; that stretch reads ELDELRLELD…GELNQNGEEE (190 aa). The region spanning 291-356 is the RH2 domain; the sequence is RPRFTLQELR…PQPESGIKRL (66 aa). The disordered stretch occupies residues 329-348; sequence EEENQIPQPPPIAHPRMSPQ.

This sequence belongs to the RILPL family. Interacts (when S-nitrosylated) with GAPDH. Interacts with RAB8A; interaction is dependent on the phosphorylation of 'Thr-72' of RAB8A. Interacts with RAB10 and RAB12; the interaction is dependent on the phosphorylation of 'Thr-73' of RAB10, and 'Ser-105' of RAB12. S-nitrosylation is required for the interaction with GAPDH.

Its subcellular location is the cytoplasm. The protein localises to the cytosol. It localises to the cytoskeleton. It is found in the microtubule organizing center. The protein resides in the centrosome. Its subcellular location is the centriole. The protein localises to the cilium basal body. Plays a role in the regulation of cell shape and polarity. Plays a role in cellular protein transport, including protein transport away from primary cilia. Neuroprotective protein, which acts by sequestring GAPDH in the cytosol and prevent the apoptotic function of GAPDH in the nucleus. Competes with SIAH1 for binding GAPDH. Does not regulate lysosomal morphology and distribution. Binds to RAB10 following LRRK2-mediated RAB10 phosphorylation which leads to inhibition of ciliogenesis. This chain is RILP-like protein 1 (RILPL1), found in Bos taurus (Bovine).